The sequence spans 247 residues: tRNA pseudouridine synthase A (247 aa).

The active-site Nucleophile is aspartate 52. Residue tyrosine 111 participates in substrate binding.

It belongs to the tRNA pseudouridine synthase TruA family. In terms of assembly, homodimer.

It catalyses the reaction uridine(38/39/40) in tRNA = pseudouridine(38/39/40) in tRNA. In terms of biological role, formation of pseudouridine at positions 38, 39 and 40 in the anticodon stem and loop of transfer RNAs. This chain is tRNA pseudouridine synthase A, found in Caulobacter vibrioides (strain ATCC 19089 / CIP 103742 / CB 15) (Caulobacter crescentus).